Here is a 502-residue protein sequence, read N- to C-terminus: MAPLKLNNKNLSQIAAAGETQVKVPTYKRGGDVKEGIVHVGVGGFHRAHLAVYVDQLMQKHGVTDYAICGVGLQPFDAAMRDALGSQDHLYTVIERSAKGSFAHVVGSINSYLFAPDNREAVIAKMAHPDTHIVSLTITESGYYYNENTHELQSEHPDIQFDLQPANEKSPRTTFGFLYAALARRYQQGLKPFTVMSCDNMQKNGSITRHMLESFARLRNPEIAKWIAEQGAFPNAMVDRITPQTSATDKTALADNFAIEDSWPVVTEPFMQWVIEDQFSDGRPPFEKVGAQVVKNVHDVEEFEKHKLRLLNGSHSAIGYPGQLAGFKYVHEVMENPLFSKFVWQMMQDEVKPLLPEIPGVNIDEYCKTLIERFSNPTIMDQLPRICLNASGKIPQFIMPSIAEAIWVTGPFRRLCFVAAAWFHYINGVDDSGKKFEVDDPMREELQAKARAGGTSPAELLSIKSLFGDDLRGDKRFLQEITKAMEDIARDGILKTLPKYID.

37–48 lines the NAD(+) pocket; that stretch reads IVHVGVGGFHRA.

Belongs to the mannitol dehydrogenase family. In terms of assembly, monomer.

The enzyme catalyses D-mannitol + NAD(+) = D-fructose + NADH + H(+). Catalyzes the NAD(H)-dependent interconversion of D-fructose and D-mannitol in the mannitol metabolic pathway. The polypeptide is Mannitol 2-dehydrogenase (Aspergillus oryzae (strain ATCC 42149 / RIB 40) (Yellow koji mold)).